A 355-amino-acid chain; its full sequence is Serum paraoxonase/arylesterase 1 (355 aa).

A disulfide bridge connects residues C42 and C353. Ca(2+) is bound by residues E53 and D54. H115 acts as the Proton acceptor in catalysis. Ca(2+) is bound by residues I117, N168, D169, and N224. N253 carries N-linked (GlcNAc...) asparagine glycosylation. 2 residues coordinate Ca(2+): D269 and N270. N270 and N324 each carry an N-linked (GlcNAc...) asparagine glycan.

This sequence belongs to the paraoxonase family. In terms of assembly, homodimer. Heterooligomer with phosphate-binding protein (HPBP). Interacts with CLU. It depends on Ca(2+) as a cofactor. In terms of processing, glycosylated. Post-translationally, the signal sequence is not cleaved. Present in two forms, form B contains a disulfide bond, form A does not. Plasma, associated with HDL (at protein level). Expressed in liver, but not in heart, brain, placenta, lung, skeletal muscle, kidney or pancreas.

Its subcellular location is the secreted. The protein resides in the extracellular space. It catalyses the reaction a phenyl acetate + H2O = a phenol + acetate + H(+). The enzyme catalyses An aryl dialkyl phosphate + H2O = dialkyl phosphate + an aryl alcohol.. It carries out the reaction an N-acyl-L-homoserine lactone + H2O = an N-acyl-L-homoserine + H(+). Its function is as follows. Hydrolyzes the toxic metabolites of a variety of organophosphorus insecticides. Capable of hydrolyzing a broad spectrum of organophosphate substrates and lactones, and a number of aromatic carboxylic acid esters. Mediates an enzymatic protection of low density lipoproteins against oxidative modification and the consequent series of events leading to atheroma formation. In Homo sapiens (Human), this protein is Serum paraoxonase/arylesterase 1 (PON1).